The primary structure comprises 157 residues: DNA-binding protein MNB1B (157 aa).

Disordered regions lie at residues 1-45 (MKGA…KRAP), 59-87 (FKEKNPKNKSVAAVGKAAGDRWKSLSESD), and 109-157 (YNKG…DDDE). 2 stretches are compositionally biased toward basic and acidic residues: residues 10–27 (AKADAKLAVKSKGAEKPA) and 76–87 (AGDRWKSLSESD). Positions 41–110 (PKRAPSAFFV…EYNKAIAAYN (70 aa)) form a DNA-binding region, HMG box. 2 stretches are compositionally biased toward acidic residues: residues 124-133 (EEEEEDEEES) and 141-157 (NDEDDEEGSEEDEDDDE). Serine 149 is subject to Phosphoserine; by CK2.

Expressed in all tissues examined.

It localises to the nucleus. Its function is as follows. Recognizes an AAGG motif at the MNF1-binding site. The sequence is that of DNA-binding protein MNB1B (MNB1B) from Zea mays (Maize).